The primary structure comprises 312 residues: Protoheme IX farnesyltransferase (312 aa).

The next 8 helical transmembrane spans lie at 12-32 (LALTKPRVIELLLVATIPAML), 41-61 (FGLILLTLIGGWMGAGAANTF), 93-113 (VFAWVLLIASVLWLGFLCHSW), 114-134 (LAAGFIVLTNWFYVFVYTKWL), 141-161 (NVIWGGAAGCMPVIVGWAVIT), 168-188 (FHAGWSSWLQAIILFMIIFFW), 240-260 (VPAASWIYLAAALISGGWFII), and 290-310 (ILFVALSVDAVLGWQTLAHAV).

Belongs to the UbiA prenyltransferase family. Protoheme IX farnesyltransferase subfamily.

The protein localises to the cell membrane. It catalyses the reaction heme b + (2E,6E)-farnesyl diphosphate + H2O = Fe(II)-heme o + diphosphate. Its pathway is porphyrin-containing compound metabolism; heme O biosynthesis; heme O from protoheme: step 1/1. Functionally, converts heme B (protoheme IX) to heme O by substitution of the vinyl group on carbon 2 of heme B porphyrin ring with a hydroxyethyl farnesyl side group. In Corynebacterium jeikeium (strain K411), this protein is Protoheme IX farnesyltransferase.